Reading from the N-terminus, the 66-residue chain is COP9 signalosome complex subunit 6a (66 aa).

The protein belongs to the peptidase M67A family. CSN6 subfamily. As to quaternary structure, component of the CSN complex, probably composed of CSN1, CSN2, CSN3, CSN4, CSN5 (CSN5A or CSN5B), CSN6 (CSN6A or CSN6B), CSN7 and CSN8.

It localises to the cytoplasm. The protein localises to the nucleus. Its function is as follows. Component of the COP9 signalosome complex (CSN), a complex involved in various cellular and developmental processes such as photomorphogenesis and auxin and jasmonate responses. The CSN complex is an essential regulator of the ubiquitin (Ubl) conjugation pathway by mediating the deneddylation of the cullin subunits of SCF-type E3 ligase complexes, leading to decrease the Ubl ligase activity of SCF. It is involved in repression of photomorphogenesis in darkness by regulating the activity of COP1-containing Ubl ligase complexes. In Brassica oleracea (Wild cabbage), this protein is COP9 signalosome complex subunit 6a (CSN6A).